We begin with the raw amino-acid sequence, 241 residues long: Accessory protein p30II (241 aa).

Short sequence motifs (nuclear localization signal) lie at residues 73–78 and 91–98; these read RRCRSR and GPRRSRPR. Residues 86 to 153 are disordered; the sequence is AFPPGGPRRS…HRNSPTDTKL (68 aa). The segment covering 107-138 has biased composition (low complexity); that stretch reads PSSTVSSSSLSFNSSSKDNSPSTNSSTSRSSG. The Mitochondrial targeting signal motif lies at 175–184; that stretch reads LRVWRLCTRR.

The protein belongs to the HTLV-1 accessory protein p30II family. In terms of assembly, p30II binds to the KIX domains of CREBBP and EP300.

Its subcellular location is the host nucleus. The protein localises to the host nucleolus. It is found in the host mitochondrion inner membrane. Functionally, p30II is a multifunctional regulator that sequesters EP300/CREBBP and down-regulates CREB-responsive element (CRE) and Tax-responsive element (TRE) mediated transcription. Specifically binds and represses tax/rex mRNA nuclear export. Since Tax and Rex are positive regulators of viral gene expression, their inhibition by p30II reduces virion production, and allows the virus to escape the host immune surveillance and persist latently in an immune-competent host. In terms of biological role, p13II increases mitochondrial permeability to monovalent cations, producing a rapid, membrane potential-dependent influx of potassium. This could involve a channel-forming activity. Interferes with cell proliferation and transformation and promotes apoptosis induced by ceramide and Fas ligand, probably using the Ras signaling. The chain is Accessory protein p30II from Human T-cell leukemia virus 1 (isolate Caribbea HS-35 subtype A) (HTLV-1).